The sequence spans 208 residues: MKFVAFARELQGTGASRRLRHGGKVPGIVYGGSGKPTSIELDHNALYHALKKEAFHSSILEMELAGQSEKVVLRALQMHAFKQLVLHVDFQRVDETTRIKKKVPLHFVNEAESQAVKLDKCLINHVVSELEIECLAEKLPEFLTVDLGGLSKGQSLHVDDLKLEASIKVVTHGRKNPVVATVVPIVEEEVIVAAPVEAPAKGKGKGKK.

This sequence belongs to the bacterial ribosomal protein bL25 family. CTC subfamily. In terms of assembly, part of the 50S ribosomal subunit; part of the 5S rRNA/L5/L18/L25 subcomplex. Contacts the 5S rRNA. Binds to the 5S rRNA independently of L5 and L18.

This is one of the proteins that binds to the 5S RNA in the ribosome where it forms part of the central protuberance. This chain is Large ribosomal subunit protein bL25, found in Leptothrix cholodnii (strain ATCC 51168 / LMG 8142 / SP-6) (Leptothrix discophora (strain SP-6)).